A 475-amino-acid chain; its full sequence is UDP-N-acetylmuramate--L-alanine ligase (475 aa).

Gly125–Thr131 is a binding site for ATP.

It belongs to the MurCDEF family.

Its subcellular location is the cytoplasm. The catalysed reaction is UDP-N-acetyl-alpha-D-muramate + L-alanine + ATP = UDP-N-acetyl-alpha-D-muramoyl-L-alanine + ADP + phosphate + H(+). It functions in the pathway cell wall biogenesis; peptidoglycan biosynthesis. Its function is as follows. Cell wall formation. The polypeptide is UDP-N-acetylmuramate--L-alanine ligase (Haemophilus influenzae (strain 86-028NP)).